A 200-amino-acid chain; its full sequence is Small ribosomal subunit protein uS4 (200 aa).

Residues 91-150 (TRLDNVVYRLGITPTRRSARQLVSHKHITVNGKIVNIPSYALKVGDIIGLTEKTKSSNAI) form the S4 RNA-binding domain.

It belongs to the universal ribosomal protein uS4 family. As to quaternary structure, part of the 30S ribosomal subunit. Contacts protein S5. The interaction surface between S4 and S5 is involved in control of translational fidelity.

In terms of biological role, one of the primary rRNA binding proteins, it binds directly to 16S rRNA where it nucleates assembly of the body of the 30S subunit. Functionally, with S5 and S12 plays an important role in translational accuracy. The sequence is that of Small ribosomal subunit protein uS4 from Amoebophilus asiaticus (strain 5a2).